Consider the following 189-residue polypeptide: MTATPANVTLKDLNDQWAMNWKLCDDSEPMLVAQGVPWLVRKLLGLISMQVALKTVPDPATGLTHFFAEYKPPFGLPSSGEERVLDFVAEEITVPVFGTLRVSTRWATPKELDEIDAYLGEGFEKGTKEVIHMKTENSELGVVTHQTFGFEKIKGVRYHTRHIVVKRGGESTRLTLVYDYVGPQHAKKS.

It belongs to the pericyclase pydY family.

It functions in the pathway mycotoxin biosynthesis. In terms of biological role, probable pericyclase; part of the gene scp cluster that mediates the biosynthesis of a hirsutellone-like compound that has still to be identified. The protein is Probable pericyclase scpY of Mollisia scopiformis (Conifer needle endophyte fungus).